The following is an 89-amino-acid chain: Small ribosomal subunit protein uS14A (89 aa).

It belongs to the universal ribosomal protein uS14 family. As to quaternary structure, part of the 30S ribosomal subunit. Contacts proteins S3 and S10.

Binds 16S rRNA, required for the assembly of 30S particles and may also be responsible for determining the conformation of the 16S rRNA at the A site. The sequence is that of Small ribosomal subunit protein uS14A from Staphylococcus haemolyticus (strain JCSC1435).